Here is a 538-residue protein sequence, read N- to C-terminus: Lipid scramblase CLPTM1L (538 aa).

The Cytoplasmic portion of the chain corresponds to 1-10; that stretch reads MWSGRSSFTS. Residues 11–31 traverse the membrane as a helical segment; it reads LVVGVFVVYVVHTCWVMYGIV. Residues 32–284 lie on the Extracellular side of the membrane; the sequence is YTRPCSGDAN…VKGIFVDTNL (253 aa). N-linked (GlcNAc...) asparagine glycans are attached at residues asparagine 91, asparagine 101, and asparagine 229. The helical transmembrane segment at 285 to 305 threads the bilayer; the sequence is YFLALTFFVAAFHLLFDFLAF. Topologically, residues 306–324 are cytoplasmic; the sequence is KNDISFWKKKKSMIGMSTK. The helical transmembrane segment at 325–342 threads the bilayer; that stretch reads AVLWRCFSTVVIFLFLLD. Over 343–346 the chain is Extracellular; the sequence is EQTS. Residues 347–364 form a helical membrane-spanning segment; it reads LLVLVPAGVGAAIELWKV. The Cytoplasmic segment spans residues 365–402; sequence KKALKMTIFWRGLMPEFQFGTYSESERKTEEYDTQAMK. The chain crosses the membrane as a helical span at residues 403-423; it reads YLSYLLYPLCVGGAVYSLLNI. Topologically, residues 424–428 are extracellular; it reads KYKSW. The chain crosses the membrane as a helical span at residues 429-449; sequence YSWLINSFVNGVYAFGFLFML. The Cytoplasmic segment spans residues 450 to 538; that stretch reads PQLFVNYKLK…EKATRAPHTD (89 aa).

It belongs to the CLPTM1 family. In terms of tissue distribution, ubiquitously expressed.

It localises to the endoplasmic reticulum membrane. The catalysed reaction is a 6-(alpha-D-glucosaminyl)-1-(1,2-diacyl-sn-glycero-3-phospho)-1D-myo-inositol(in) = a 6-(alpha-D-glucosaminyl)-1-(1,2-diacyl-sn-glycero-3-phospho)-1D-myo-inositol(out). It catalyses the reaction 6-(alpha-D-glucosaminyl)-(1-octadecanoyl,2-(9Z)-octadecenoyl-sn-glycero-3-phospho)-1D-myo-inositol(in) = 6-(alpha-D-glucosaminyl)-(1-octadecanoyl,2-(9Z)-octadecenoyl-sn-glycero-3-phospho)-1D-myo-inositol(out). The enzyme catalyses a 1,2-diacyl-sn-glycero-3-phospho-(1D-myo-inositol)(in) = a 1,2-diacyl-sn-glycero-3-phospho-(1D-myo-inositol)(out). It carries out the reaction a 1,2-diacyl-sn-glycero-3-phosphocholine(in) = a 1,2-diacyl-sn-glycero-3-phosphocholine(out). The catalysed reaction is a 1,2-diacyl-sn-glycero-3-phosphoethanolamine(in) = a 1,2-diacyl-sn-glycero-3-phosphoethanolamine(out). In terms of biological role, scramblase that mediates the translocation of glucosaminylphosphatidylinositol (alpha-D-GlcN-(1-6)-(1,2-diacyl-sn-glycero-3-phospho)-1D-myo-inositol, GlcN-PI) across the endoplasmic reticulum (ER) membrane, from the cytosolic leaflet to the luminal leaflet of the ER membrane, where it participates in the biosynthesis of glycosylphosphatidylinositol (GPI). GPI is a lipid glycoconjugate involved in post-translational modification of proteins. Can also translocate 1,2-diacyl-sn-glycero-3-phospho-(1D-myo-inositol) (phosphatidylinositol or PI), as well as several other phospholipids (1,2-diacyl-sn-glycero-3-phosphocholine, 1,2-diacyl-sn-glycero-3-phosphoethanolamine), and N-acetylglucosaminylphosphatidylinositol (GlcNAc-PI) in vitro. This is Lipid scramblase CLPTM1L (CLPTM1L) from Homo sapiens (Human).